The sequence spans 116 residues: NADH-ubiquinone oxidoreductase chain 3 (116 aa).

3 consecutive transmembrane segments (helical) span residues 3-23 (LITT…TISF), 56-76 (FFLI…LLPL), and 87-107 (LTLI…IYEW).

It belongs to the complex I subunit 3 family.

The protein resides in the mitochondrion membrane. It carries out the reaction a ubiquinone + NADH + 5 H(+)(in) = a ubiquinol + NAD(+) + 4 H(+)(out). Functionally, core subunit of the mitochondrial membrane respiratory chain NADH dehydrogenase (Complex I) that is believed to belong to the minimal assembly required for catalysis. Complex I functions in the transfer of electrons from NADH to the respiratory chain. The immediate electron acceptor for the enzyme is believed to be ubiquinone. In Oncorhynchus tshawytscha (Chinook salmon), this protein is NADH-ubiquinone oxidoreductase chain 3 (MT-ND3).